We begin with the raw amino-acid sequence, 179 residues long: ATP synthase subunit delta (179 aa).

The protein belongs to the ATPase delta chain family. As to quaternary structure, F-type ATPases have 2 components, F(1) - the catalytic core - and F(0) - the membrane proton channel. F(1) has five subunits: alpha(3), beta(3), gamma(1), delta(1), epsilon(1). F(0) has three main subunits: a(1), b(2) and c(10-14). The alpha and beta chains form an alternating ring which encloses part of the gamma chain. F(1) is attached to F(0) by a central stalk formed by the gamma and epsilon chains, while a peripheral stalk is formed by the delta and b chains.

It is found in the cell membrane. F(1)F(0) ATP synthase produces ATP from ADP in the presence of a proton or sodium gradient. F-type ATPases consist of two structural domains, F(1) containing the extramembraneous catalytic core and F(0) containing the membrane proton channel, linked together by a central stalk and a peripheral stalk. During catalysis, ATP synthesis in the catalytic domain of F(1) is coupled via a rotary mechanism of the central stalk subunits to proton translocation. Its function is as follows. This protein is part of the stalk that links CF(0) to CF(1). It either transmits conformational changes from CF(0) to CF(1) or is implicated in proton conduction. The polypeptide is ATP synthase subunit delta (Ureaplasma urealyticum serovar 10 (strain ATCC 33699 / Western)).